The sequence spans 101 residues: Small ribosomal subunit protein uS14 (101 aa).

It belongs to the universal ribosomal protein uS14 family. Part of the 30S ribosomal subunit. Contacts proteins S3 and S10.

Functionally, binds 16S rRNA, required for the assembly of 30S particles and may also be responsible for determining the conformation of the 16S rRNA at the A site. The polypeptide is Small ribosomal subunit protein uS14 (Arthrobacter sp. (strain FB24)).